Reading from the N-terminus, the 172-residue chain is Translation initiation factor IF-3 (172 aa).

This sequence belongs to the IF-3 family. Monomer.

Its subcellular location is the cytoplasm. In terms of biological role, IF-3 binds to the 30S ribosomal subunit and shifts the equilibrium between 70S ribosomes and their 50S and 30S subunits in favor of the free subunits, thus enhancing the availability of 30S subunits on which protein synthesis initiation begins. This is Translation initiation factor IF-3 from Bartonella quintana (strain Toulouse) (Rochalimaea quintana).